We begin with the raw amino-acid sequence, 214 residues long: MSTKLQDHFDKITKILSGFGVEGCISYGEITFSIRDQRDIHLILKKLKKEYLFEQLTDVTAVDYLTYGQSDWQVGKVVSQTGFSRGRQQDFKTAAVDNRFEIIYQLLSMANNVRIRVKCKLKDAQIILVDSVSDLWPSANWTEREVYDMFGIYFNNHPDLRRVLTDYGFVGHPLRKDFPQTGYVEMRYDENLGRVVYEPVEIDDRVNTPRVIRN.

Belongs to the complex I 30 kDa subunit family. NDH-1 is composed of 14 different subunits. Subunits NuoB, C, D, E, F, and G constitute the peripheral sector of the complex.

The protein resides in the cell inner membrane. It catalyses the reaction a quinone + NADH + 5 H(+)(in) = a quinol + NAD(+) + 4 H(+)(out). In terms of biological role, NDH-1 shuttles electrons from NADH, via FMN and iron-sulfur (Fe-S) centers, to quinones in the respiratory chain. The immediate electron acceptor for the enzyme in this species is believed to be ubiquinone. Couples the redox reaction to proton translocation (for every two electrons transferred, four hydrogen ions are translocated across the cytoplasmic membrane), and thus conserves the redox energy in a proton gradient. In Francisella tularensis subsp. tularensis (strain WY96-3418), this protein is NADH-quinone oxidoreductase subunit C.